We begin with the raw amino-acid sequence, 294 residues long: ATP synthase gamma chain (294 aa).

The protein belongs to the ATPase gamma chain family. In terms of assembly, F-type ATPases have 2 components, CF(1) - the catalytic core - and CF(0) - the membrane proton channel. CF(1) has five subunits: alpha(3), beta(3), gamma(1), delta(1), epsilon(1). CF(0) has three main subunits: a, b and c.

It is found in the cell inner membrane. Produces ATP from ADP in the presence of a proton gradient across the membrane. The gamma chain is believed to be important in regulating ATPase activity and the flow of protons through the CF(0) complex. This is ATP synthase gamma chain from Campylobacter jejuni (strain RM1221).